The chain runs to 968 residues: RNA polymerase-associated protein RapA (968 aa).

One can recognise a Helicase ATP-binding domain in the interval 164 to 334; sequence DVGRRHAPRV…FARLRLLDPN (171 aa). 177 to 184 provides a ligand contact to ATP; it reads DEVGLGKT. Residues 280-283 carry the DEAH box motif; the sequence is DEAH. The 173-residue stretch at 490–662 folds into the Helicase C-terminal domain; sequence RVEWLMGYLT…YLASPDETEG (173 aa).

It belongs to the SNF2/RAD54 helicase family. RapA subfamily. Interacts with the RNAP. Has a higher affinity for the core RNAP than for the holoenzyme. Its ATPase activity is stimulated by binding to RNAP.

Functionally, transcription regulator that activates transcription by stimulating RNA polymerase (RNAP) recycling in case of stress conditions such as supercoiled DNA or high salt concentrations. Probably acts by releasing the RNAP, when it is trapped or immobilized on tightly supercoiled DNA. Does not activate transcription on linear DNA. Probably not involved in DNA repair. This Escherichia coli O81 (strain ED1a) protein is RNA polymerase-associated protein RapA.